The primary structure comprises 166 residues: Large ribosomal subunit protein uL10 (166 aa).

Part of the ribosomal stalk of the 50S ribosomal subunit. The N-terminus interacts with L11 and 23S rRNA to form the base of the stalk. The C-terminus forms an elongated spine to which L12 dimers bind in a sequential fashion forming a pentameric L10(L12)2(L12)2 complex.

Its function is as follows. Forms part of the ribosomal stalk, playing a central role in the interaction of the ribosome with GTP-bound translation factors (such as IF-2, EF-Tu, EF-G and RF3). This is Large ribosomal subunit protein uL10 (rplJ) from Bacillus subtilis (strain 168).